Here is a 257-residue protein sequence, read N- to C-terminus: Thioredoxin-dependent peroxide reductase, mitochondrial (257 aa).

The N-terminal 62 residues, 1–62, are a transit peptide targeting the mitochondrion; sequence MAAAAGRLLW…SAFSTSSSFH (62 aa). Residues 64-222 enclose the Thioredoxin domain; the sequence is PAVTQHAPYF…TLRLVKAFQF (159 aa). Lys84 is modified (N6-succinyllysine). Position 92 is an N6-acetyllysine; alternate (Lys92). At Lys92 the chain carries N6-succinyllysine; alternate. Cys109 functions as the Cysteine sulfenic acid (-SOH) intermediate in the catalytic mechanism. Thr147 is modified (phosphothreonine).

The protein belongs to the peroxiredoxin family. AhpC/Prx1 subfamily. In terms of assembly, homodimer; disulfide-linked, upon oxidation. 6 homodimers assemble to form a ring-like dodecamer. Interacts with NEK6. Interacts with LRRK2. Interacts with MAP3K13. Interacts with RPS6KC1 (via PX domain). Phosphorylated by LRRK2; phosphorylation reduces perodixase activity. Post-translationally, the enzyme can be inactivated by further oxidation of the cysteine sulfenic acid (C(P)-SOH) to sulphinic acid (C(P)-SO2H) and sulphonic acid (C(P)-SO3H) instead of its condensation to a disulfide bond. In terms of processing, S-palmitoylated. Housekeeping-type gene preferentially expressed in murine erythroleukemia (MEL) cells.

Its subcellular location is the mitochondrion. The protein resides in the cytoplasm. It localises to the early endosome. The catalysed reaction is a hydroperoxide + [thioredoxin]-dithiol = an alcohol + [thioredoxin]-disulfide + H2O. Functionally, thiol-specific peroxidase that catalyzes the reduction of hydrogen peroxide and organic hydroperoxides to water and alcohols, respectively. Plays a role in cell protection against oxidative stress by detoxifying peroxides. Acts synergistically with MAP3K13 to regulate the activation of NF-kappa-B in the cytosol. Required for the maintenance of physical strength. The sequence is that of Thioredoxin-dependent peroxide reductase, mitochondrial (Prdx3) from Mus musculus (Mouse).